A 360-amino-acid polypeptide reads, in one-letter code: Phospho-N-acetylmuramoyl-pentapeptide-transferase (360 aa).

10 consecutive transmembrane segments (helical) span residues 25–45, 73–93, 97–117, 134–154, 168–188, 199–219, 236–256, 263–283, 288–308, and 338–358; these read RGIL…PWMI, TMGG…WADL, YVWV…VDDY, YFWQ…TAPT, VTIP…VGSS, GLAI…CYLS, SGEL…FLWF, VFMG…IAVI, IVLF…VIQV, and VIVR…ATLK.

The protein belongs to the glycosyltransferase 4 family. MraY subfamily. Requires Mg(2+) as cofactor.

It is found in the cell inner membrane. The enzyme catalyses UDP-N-acetyl-alpha-D-muramoyl-L-alanyl-gamma-D-glutamyl-meso-2,6-diaminopimeloyl-D-alanyl-D-alanine + di-trans,octa-cis-undecaprenyl phosphate = di-trans,octa-cis-undecaprenyl diphospho-N-acetyl-alpha-D-muramoyl-L-alanyl-D-glutamyl-meso-2,6-diaminopimeloyl-D-alanyl-D-alanine + UMP. The protein operates within cell wall biogenesis; peptidoglycan biosynthesis. Functionally, catalyzes the initial step of the lipid cycle reactions in the biosynthesis of the cell wall peptidoglycan: transfers peptidoglycan precursor phospho-MurNAc-pentapeptide from UDP-MurNAc-pentapeptide onto the lipid carrier undecaprenyl phosphate, yielding undecaprenyl-pyrophosphoryl-MurNAc-pentapeptide, known as lipid I. In Pseudomonas putida (strain ATCC 700007 / DSM 6899 / JCM 31910 / BCRC 17059 / LMG 24140 / F1), this protein is Phospho-N-acetylmuramoyl-pentapeptide-transferase.